Consider the following 425-residue polypeptide: 2-methylserine hydroxymethyltransferase (425 aa).

Residues L126 and 130–132 each bind (6S)-5,6,7,8-tetrahydrofolate; that span reads GHL. An N6-(pyridoxal phosphate)lysine modification is found at K235.

This sequence belongs to the SHMT family. In terms of assembly, homodimer. Pyridoxal 5'-phosphate serves as cofactor.

It localises to the cytoplasm. It catalyses the reaction (6R)-5,10-methylene-5,6,7,8-tetrahydrofolate + D-alanine + H2O = 2-methylserine + (6S)-5,6,7,8-tetrahydrofolate. It participates in one-carbon metabolism; tetrahydrofolate interconversion. Catalyzes the reversible interconversion of alpha-methyl-L-serine to D-alanine with tetrahydrofolate (THF) serving as the one-carbon carrier. Cannot use alpha-methyl-D-serine, L-serine, D-serine or L-alanine. The protein is 2-methylserine hydroxymethyltransferase of Aminobacter sp.